The sequence spans 109 residues: Putative small proline-rich protein 2J (109 aa).

A run of 5 repeats spans residues 21–29 (RSAQSPVLC), 30–38 (QSAPSLVLL), 39–47 (QSAQSPIHC), 48–56 (QSALSHAHL), and 57–65 (SHASRNALL). Positions 21–65 (RSAQSPVLCQSAPSLVLLQSAQSPIHCQSALSHAHLSHASRNALL) are 5 X 9 AA approximate tandem repeats. Positions 76–109 (AHPRANKGFSSLQNQKKRTESILHKSIATPPSSI) are disordered.

Belongs to the cornifin (SPRR) family. Not expressed in uterus.

Its subcellular location is the cytoplasm. Its function is as follows. Cross-linked envelope protein of keratinocytes. It is a keratinocyte protein that first appears in the cell cytosol, but ultimately becomes cross-linked to membrane proteins by transglutaminase. All that results in the formation of an insoluble envelope beneath the plasma membrane. This is Putative small proline-rich protein 2J (Sprr2j) from Mus musculus (Mouse).